The primary structure comprises 417 residues: Pygopus homolog 1 (417 aa).

Positions 1 to 11 are enriched in basic and acidic residues; sequence MSAEQDKEPIA. 3 disordered regions span residues 1 to 71, 175 to 265, and 284 to 318; these read MSAE…AANP, HFRQ…MEDP, and ENSR…CTPD. Residues 18–27 show a composition bias toward gly residues; the sequence is GDSGLDGLGG. Residues 35–41 carry the Nuclear localization signal motif; that stretch reads PDKKKRK. Composition is skewed to polar residues over residues 180–221, 240–256, and 284–305; these read SAEN…TNHS, DFTQ…SSTH, and ENSR…QNKP. The PHD-type zinc finger occupies 338-396; sequence VYPCGICTNEVNDDQDAILCEASCQKWFHRICTGMTETAYGLLTAEASAVWGCDTCMAD. The interval 339–386 is interaction with H3K4me2; that stretch reads YPCGICTNEVNDDQDAILCEASCQKWFHRICTGMTETAYGLLTAEASA. Positions 371–389 are interaction with BCL9; sequence GMTETAYGLLTAEASAVWG.

As to quaternary structure, interacts with BCL9 via The PHD-type zinc finger motiv, and thereby becomes part of the nuclear beta-catenin/TCF complex. Found in a complex with BCL9L, CDC73, CTNNB1 and PYGO1. Interacts with histone H3 mono-, di- or tri-methylated at 'Lys4' (H3K4me1, H3K4me2, H3K4me3); the interaction is enhanced by the interaction with BCL9.

The protein localises to the nucleus. Involved in signal transduction through the Wnt pathway. The chain is Pygopus homolog 1 (Pygo1) from Mus musculus (Mouse).